The sequence spans 156 residues: MLMENLEYDVLLEKFKKILREGGLKYTKQREVLLKTLYHSDTHYTPESLYMEIKQAEPDSNVGIATVYRTLNLLEEAEMVTSLSLDSAGKKYELSNKPHHDHMICKVCGKIIEFENPIIERQQSLIANEHHFKLTGHLMQLYGICSDCNHKTKVKI.

Residues Met-1–Asn-96 form a DNA-binding region. Residues His-43 and Glu-93 each contribute to the Zn(2+) site. A dimerization region spans residues Lys-97–Ile-156. The Fe cation site is built by His-99 and Asp-101. Zn(2+) is bound by residues His-102, Cys-105, Cys-108, and Glu-113. Fe cation contacts are provided by Glu-120 and His-137.

The protein belongs to the Fur family. Homodimer.

It localises to the cytoplasm. Its function is as follows. Acts as a global negative controlling element, employing Fe(2+) as a cofactor to bind the operator of the repressed genes. This Campylobacter upsaliensis protein is Ferric uptake regulation protein (fur).